The primary structure comprises 553 residues: Urocanate hydratase (553 aa).

NAD(+)-binding positions include Gly-51 to Gly-52, Gln-129, Gly-175 to Gly-177, Glu-195, Arg-200, Asn-241 to Ala-242, Gln-262 to His-266, Tyr-272 to Leu-273, and Tyr-321. The active site involves Cys-409. Gly-491 contributes to the NAD(+) binding site.

This sequence belongs to the urocanase family. The cofactor is NAD(+).

It localises to the cytoplasm. The enzyme catalyses 4-imidazolone-5-propanoate = trans-urocanate + H2O. It participates in amino-acid degradation; L-histidine degradation into L-glutamate; N-formimidoyl-L-glutamate from L-histidine: step 2/3. Catalyzes the conversion of urocanate to 4-imidazolone-5-propionate. The polypeptide is Urocanate hydratase (Sphingopyxis alaskensis (strain DSM 13593 / LMG 18877 / RB2256) (Sphingomonas alaskensis)).